We begin with the raw amino-acid sequence, 193 residues long: uncharacterized protein (193 aa).

The interval 1–84 is disordered; the sequence is MTSKCSKWHE…RRSNQRIQLY (84 aa). A compositionally biased stretch (basic residues) spans 43–78; that stretch reads SSPRRSSPRRSPRRSSPRRSSPRRSSPRRSSPRRSN.

The protein belongs to the IIV-6 378R family.

This is an uncharacterized protein from Invertebrate iridescent virus 6 (IIV-6).